The following is a 712-amino-acid chain: Ribosomal RNA large subunit methyltransferase K/L (712 aa).

Residues 43-154 (LAYRITLWTR…NGQLTISMNF (112 aa)) form the THUMP domain.

The protein belongs to the methyltransferase superfamily. RlmKL family.

The protein resides in the cytoplasm. The enzyme catalyses guanosine(2445) in 23S rRNA + S-adenosyl-L-methionine = N(2)-methylguanosine(2445) in 23S rRNA + S-adenosyl-L-homocysteine + H(+). It catalyses the reaction guanosine(2069) in 23S rRNA + S-adenosyl-L-methionine = N(2)-methylguanosine(2069) in 23S rRNA + S-adenosyl-L-homocysteine + H(+). In terms of biological role, specifically methylates the guanine in position 2445 (m2G2445) and the guanine in position 2069 (m7G2069) of 23S rRNA. The chain is Ribosomal RNA large subunit methyltransferase K/L from Shewanella frigidimarina (strain NCIMB 400).